A 212-amino-acid chain; its full sequence is Peptide methionine sulfoxide reductase MsrA (212 aa).

The active site involves Cys-52.

It belongs to the MsrA Met sulfoxide reductase family.

The enzyme catalyses L-methionyl-[protein] + [thioredoxin]-disulfide + H2O = L-methionyl-(S)-S-oxide-[protein] + [thioredoxin]-dithiol. It carries out the reaction [thioredoxin]-disulfide + L-methionine + H2O = L-methionine (S)-S-oxide + [thioredoxin]-dithiol. In terms of biological role, has an important function as a repair enzyme for proteins that have been inactivated by oxidation. Catalyzes the reversible oxidation-reduction of methionine sulfoxide in proteins to methionine. The chain is Peptide methionine sulfoxide reductase MsrA from Salmonella schwarzengrund (strain CVM19633).